Reading from the N-terminus, the 94-residue chain is Co-chaperonin GroES (94 aa).

This sequence belongs to the GroES chaperonin family. As to quaternary structure, heptamer of 7 subunits arranged in a ring. Interacts with the chaperonin GroEL.

Its subcellular location is the cytoplasm. Together with the chaperonin GroEL, plays an essential role in assisting protein folding. The GroEL-GroES system forms a nano-cage that allows encapsulation of the non-native substrate proteins and provides a physical environment optimized to promote and accelerate protein folding. GroES binds to the apical surface of the GroEL ring, thereby capping the opening of the GroEL channel. In Lactobacillus gasseri (strain ATCC 33323 / DSM 20243 / BCRC 14619 / CIP 102991 / JCM 1131 / KCTC 3163 / NCIMB 11718 / NCTC 13722 / AM63), this protein is Co-chaperonin GroES.